Consider the following 333-residue polypeptide: Transaldolase (333 aa).

Catalysis depends on Lys-135, which acts as the Schiff-base intermediate with substrate.

Belongs to the transaldolase family. Type 1 subfamily. As to quaternary structure, homodimer.

The protein localises to the cytoplasm. It catalyses the reaction D-sedoheptulose 7-phosphate + D-glyceraldehyde 3-phosphate = D-erythrose 4-phosphate + beta-D-fructose 6-phosphate. Its pathway is carbohydrate degradation; pentose phosphate pathway; D-glyceraldehyde 3-phosphate and beta-D-fructose 6-phosphate from D-ribose 5-phosphate and D-xylulose 5-phosphate (non-oxidative stage): step 2/3. In terms of biological role, transaldolase is important for the balance of metabolites in the pentose-phosphate pathway. This is Transaldolase from Prochlorococcus marinus subsp. pastoris (strain CCMP1986 / NIES-2087 / MED4).